The following is a 151-amino-acid chain: Large ribosomal subunit protein bL9 (151 aa).

This sequence belongs to the bacterial ribosomal protein bL9 family.

In terms of biological role, binds to the 23S rRNA. The sequence is that of Large ribosomal subunit protein bL9 from Desulforapulum autotrophicum (strain ATCC 43914 / DSM 3382 / VKM B-1955 / HRM2) (Desulfobacterium autotrophicum).